A 467-amino-acid polypeptide reads, in one-letter code: ATP-dependent protease ATPase subunit HslU (467 aa).

ATP contacts are provided by residues Val-22 and 64–69; that span reads GVGKTE. The disordered stretch occupies residues 146–185; that stretch reads KASNNSNPLESLLGGAIPNFGNNDDEEEETPTEEIKTKRS. Over residues 168–177 the composition is skewed to acidic residues; that stretch reads NDDEEEETPT. The ATP site is built by Asp-280, Glu-345, and Arg-417.

This sequence belongs to the ClpX chaperone family. HslU subfamily. As to quaternary structure, a double ring-shaped homohexamer of HslV is capped on each side by a ring-shaped HslU homohexamer. The assembly of the HslU/HslV complex is dependent on binding of ATP.

The protein resides in the cytoplasm. Functionally, ATPase subunit of a proteasome-like degradation complex; this subunit has chaperone activity. The binding of ATP and its subsequent hydrolysis by HslU are essential for unfolding of protein substrates subsequently hydrolyzed by HslV. HslU recognizes the N-terminal part of its protein substrates and unfolds these before they are guided to HslV for hydrolysis. In Staphylococcus haemolyticus (strain JCSC1435), this protein is ATP-dependent protease ATPase subunit HslU.